Here is a 310-residue protein sequence, read N- to C-terminus: tRNA dimethylallyltransferase (310 aa).

An ATP-binding site is contributed by 14-21 (GPTASGKT). 16–21 (TASGKT) contacts substrate. Positions 39 to 42 (DSMQ) are interaction with substrate tRNA.

This sequence belongs to the IPP transferase family. In terms of assembly, monomer. The cofactor is Mg(2+).

The catalysed reaction is adenosine(37) in tRNA + dimethylallyl diphosphate = N(6)-dimethylallyladenosine(37) in tRNA + diphosphate. In terms of biological role, catalyzes the transfer of a dimethylallyl group onto the adenine at position 37 in tRNAs that read codons beginning with uridine, leading to the formation of N6-(dimethylallyl)adenosine (i(6)A). This chain is tRNA dimethylallyltransferase, found in Corynebacterium jeikeium (strain K411).